Here is a 206-residue protein sequence, read N- to C-terminus: Small ribosomal subunit protein uS4A (206 aa).

An S4 RNA-binding domain is found at 98–163 (MRLDNVVYRL…SERFKMFAEN (66 aa)).

Belongs to the universal ribosomal protein uS4 family. In terms of assembly, part of the 30S ribosomal subunit. Contacts protein S5. The interaction surface between S4 and S5 is involved in control of translational fidelity.

One of the primary rRNA binding proteins, it binds directly to 16S rRNA where it nucleates assembly of the body of the 30S subunit. Its function is as follows. With S5 and S12 plays an important role in translational accuracy. The protein is Small ribosomal subunit protein uS4A of Clostridium perfringens (strain SM101 / Type A).